Consider the following 26-residue polypeptide: 83 kDa hypersensitivity protein (26 aa).

The segment at 1–26 (FTPEDFISAPRRGEAIPDPKGELAVF) is disordered. The span at 11-26 (RRGEAIPDPKGELAVF) shows a compositional bias: basic and acidic residues.

The chain is 83 kDa hypersensitivity protein from Trichophyton tonsurans (Scalp ringworm fungus).